Consider the following 445-residue polypeptide: Trigger factor (445 aa).

Residues 162 to 247 (GDQVTIDAIG…IKAVHTAEPT (86 aa)) form the PPIase FKBP-type domain.

Belongs to the FKBP-type PPIase family. Tig subfamily.

It is found in the cytoplasm. It carries out the reaction [protein]-peptidylproline (omega=180) = [protein]-peptidylproline (omega=0). Functionally, involved in protein export. Acts as a chaperone by maintaining the newly synthesized protein in an open conformation. Functions as a peptidyl-prolyl cis-trans isomerase. The polypeptide is Trigger factor (Rickettsia conorii (strain ATCC VR-613 / Malish 7)).